Consider the following 299-residue polypeptide: ATP synthase gamma chain (299 aa).

The protein belongs to the ATPase gamma chain family. F-type ATPases have 2 components, CF(1) - the catalytic core - and CF(0) - the membrane proton channel. CF(1) has five subunits: alpha(3), beta(3), gamma(1), delta(1), epsilon(1). CF(0) has three main subunits: a, b and c.

Its subcellular location is the cell inner membrane. In terms of biological role, produces ATP from ADP in the presence of a proton gradient across the membrane. The gamma chain is believed to be important in regulating ATPase activity and the flow of protons through the CF(0) complex. This is ATP synthase gamma chain from Rhodospirillum rubrum.